The following is a 152-amino-acid chain: MLECQSMMEKLSPFVDVASLEIESLRRIKRPKRFSEEESEETENTTNSSNAVFGFPNLPEEPNRDMDQSVLCRICVRLPDGRRIQRSFLKSESVQLLWSFCYSQIGDESSERKRRFKLIQGFPGDYKNLYFGSNTTFEQSGLANSLVSVTWL.

The tract at residues 32–61 is disordered; the sequence is KRFSEEESEETENTTNSSNAVFGFPNLPEE. Residues 67 to 150 form the UBX domain; the sequence is DQSVLCRICV…GLANSLVSVT (84 aa).

The polypeptide is Plant UBX domain-containing protein 12 (Arabidopsis thaliana (Mouse-ear cress)).